A 226-amino-acid polypeptide reads, in one-letter code: Myosin regulatory light chain 10 (226 aa).

EF-hand domains follow at residues 84–119 (NSPA…LGRI), 154–189 (DPEE…QADR), and 190–225 (FSEE…GEEK). The Ca(2+) site is built by Asp-97, Asn-99, Asp-101, and Asp-108.

In terms of assembly, myosin is a hexamer of 2 heavy chains and 4 light chains.

In Homo sapiens (Human), this protein is Myosin regulatory light chain 10 (MYL10).